The following is a 719-amino-acid chain: Capsid protein (719 aa).

A disordered region spans residues 647–678 (GDALPSRERKRQAWQDSTSEETESEAEAQEEK). A compositionally biased stretch (acidic residues) spans 664–674 (TSEETESEAEA).

It belongs to the anelloviridae capsid protein family.

The protein localises to the virion. In terms of biological role, self assemble to form an icosahedral capsid. This chain is Capsid protein, found in Torque teno virus (isolate Human/Germany/KAV/2001) (TTV).